A 613-amino-acid polypeptide reads, in one-letter code: Vitamin B12 transporter BtuB (613 aa).

The signal sequence occupies residues 1-22; sequence MQKSLLAIAMASLLTPISYLHA. A TonB box motif is present at residues 29–36; it reads DTVVVTAN. One can recognise a TBDR plug domain in the interval 41-154; sequence VESSVLASIS…IGGVIHIKTI (114 aa). The TBDR beta-barrel domain occupies 159-613; the sequence is QTKHDANLGY…NWFATVNYRF (455 aa). A TonB C-terminal box motif is present at residues 591–613; the sequence is HSSGGKYYVGEGRNWFATVNYRF.

The protein belongs to the TonB-dependent receptor family. BtuB (TC 1.B.14.3.1) subfamily.

Its subcellular location is the cell outer membrane. Involved in the active translocation of vitamin B12 (cyanocobalamin) across the outer membrane to the periplasmic space. It derives its energy for transport by interacting with the trans-periplasmic membrane protein TonB. This Vibrio vulnificus (strain YJ016) protein is Vitamin B12 transporter BtuB.